Reading from the N-terminus, the 465-residue chain is Exoenzymes regulatory protein AepA (465 aa).

The N-terminal stretch at 1–21 (MKFNVKMLSVTLGLFTSHAFA) is a signal peptide.

Belongs to the metallo-dependent hydrolases superfamily.

Its function is as follows. Involved in the control of extracellular enzymes production. Stimulates PEL, PEH, CEL, and PRT production. The protein is Exoenzymes regulatory protein AepA (aepA) of Pectobacterium carotovorum subsp. carotovorum (Erwinia carotovora subsp. carotovora).